The chain runs to 534 residues: MHDKILILDFGSQVTQLIARRVREAHVYCEIHPNDVSDEFIREFAPKGIILSGSHASTYEDHDLRAPQAVWELGVPVLGICYGMFTMVVQQGGEVEASAHREFGYAEVRAHGHTRLLQGIEDFSTPEGHGMLKVWMSHGDKVTKLPPGFKLMASTPSCPIAGMADESRGYYAVQFHPEVTHTVQGRALLERFVLEIAKAQPDWVMKDHVAEAVAAIRAQVGDEEVILGLSGGVDSSVAAALIHRAIGDRLTCVFVDHGLLRLNEGDMVMEMFAGKLHAKVVRVDAAELFMNELAGVADPEAKRKIIGRLFVDVFKAEAAKLKASGAGHRGATFLAQGTIYPDVIESGGAKTKKATTIKSHHNVGGLPEQLGLKLLEPLRDLFKDEVRELGVALGLPHDMVYRHPFPGPGLGVRILGEVKKDYADLLRRADAIFIEELRNTVDPASGKTWYELTSQAFAVFLPVKSVGVMGDGRTYDYVVALRAVQTSDFMTADWAELPYALLKRTSGRIINEVRGINRVTYDVSSKPPATIEWE.

The Glutamine amidotransferase type-1 domain maps to 4-202; sequence KILILDFGSQ…VLEIAKAQPD (199 aa). The Nucleophile role is filled by C81. Active-site residues include H176 and E178. The 200-residue stretch at 203–402 folds into the GMPS ATP-PPase domain; it reads WVMKDHVAEA…LGLPHDMVYR (200 aa). 230–236 serves as a coordination point for ATP; it reads SGGVDSS.

In terms of assembly, homodimer.

The enzyme catalyses XMP + L-glutamine + ATP + H2O = GMP + L-glutamate + AMP + diphosphate + 2 H(+). It functions in the pathway purine metabolism; GMP biosynthesis; GMP from XMP (L-Gln route): step 1/1. In terms of biological role, catalyzes the synthesis of GMP from XMP. The protein is GMP synthase [glutamine-hydrolyzing] of Methylibium petroleiphilum (strain ATCC BAA-1232 / LMG 22953 / PM1).